Consider the following 101-residue polypeptide: Small ribosomal subunit protein uS14 (101 aa).

It belongs to the universal ribosomal protein uS14 family. As to quaternary structure, part of the 30S ribosomal subunit. Contacts proteins S3 and S10.

Its function is as follows. Binds 16S rRNA, required for the assembly of 30S particles and may also be responsible for determining the conformation of the 16S rRNA at the A site. The sequence is that of Small ribosomal subunit protein uS14 from Dinoroseobacter shibae (strain DSM 16493 / NCIMB 14021 / DFL 12).